The primary structure comprises 677 residues: Zinc finger CCCH domain-containing protein 23 (677 aa).

The interval 66–117 is disordered; the sequence is PPQAASSSPTVPAAHSPFLLSRQNSGRCPAPSPSSWAQAQPFSRSNSMGNGG. Residues 69–82 show a composition bias toward low complexity; it reads AASSSPTVPAAHSP. A compositionally biased stretch (polar residues) spans 98–113; that stretch reads PSSWAQAQPFSRSNSM. The C3H1-type zinc-finger motif lies at 228 to 255; it reads GFGWKPCLYYARGFCKNGSTCRFVHGGL. An RRM domain is found at 359–435; that stretch reads RQIYLTFPAD…RVLVKPYKEK (77 aa). Residues 480–513 are a coiled coil; sequence ANELMLRRKLEEQQQAAELQQAIDLHSRRLIGLQ. A compositionally biased stretch (polar residues) spans 535–562; the sequence is TPITNAFTSGQPGATTIVESPPSSTGQL. Positions 535–607 are disordered; that stretch reads TPITNAFTSG…EHNLPDSPFA (73 aa). A compositionally biased stretch (basic and acidic residues) spans 589–601; the sequence is RNADSDQSGEHNL.

In Oryza sativa subsp. japonica (Rice), this protein is Zinc finger CCCH domain-containing protein 23.